Reading from the N-terminus, the 267-residue chain is 4-hydroxy-tetrahydrodipicolinate reductase (267 aa).

NAD(+)-binding positions include 8–13 (GAAGRM) and Glu34. Arg35 is a binding site for NADP(+). NAD(+) contacts are provided by residues 98–100 (GST) and 122–125 (APNM). The active-site Proton donor/acceptor is His155. His156 contacts (S)-2,3,4,5-tetrahydrodipicolinate. Lys159 acts as the Proton donor in catalysis. 165 to 166 (GT) serves as a coordination point for (S)-2,3,4,5-tetrahydrodipicolinate.

Belongs to the DapB family.

The protein resides in the cytoplasm. The enzyme catalyses (S)-2,3,4,5-tetrahydrodipicolinate + NAD(+) + H2O = (2S,4S)-4-hydroxy-2,3,4,5-tetrahydrodipicolinate + NADH + H(+). The catalysed reaction is (S)-2,3,4,5-tetrahydrodipicolinate + NADP(+) + H2O = (2S,4S)-4-hydroxy-2,3,4,5-tetrahydrodipicolinate + NADPH + H(+). Its pathway is amino-acid biosynthesis; L-lysine biosynthesis via DAP pathway; (S)-tetrahydrodipicolinate from L-aspartate: step 4/4. Its function is as follows. Catalyzes the conversion of 4-hydroxy-tetrahydrodipicolinate (HTPA) to tetrahydrodipicolinate. The chain is 4-hydroxy-tetrahydrodipicolinate reductase from Geobacter sp. (strain M21).